Here is a 386-residue protein sequence, read N- to C-terminus: Formate-dependent phosphoribosylglycinamide formyltransferase (386 aa).

N(1)-(5-phospho-beta-D-ribosyl)glycinamide-binding positions include 15–16 and E75; that span reads EL. Residues R107, K148, 153 to 158, 188 to 191, and E196 contribute to the ATP site; these read SSGKGQ and EQFI. The ATP-grasp domain occupies 112–301; that stretch reads ALAAQQLNLQ…EFELHLRAIV (190 aa). Residues E260 and E272 each coordinate Mg(2+). Residues D279, K349, and 356 to 357 contribute to the N(1)-(5-phospho-beta-D-ribosyl)glycinamide site; that span reads RR.

It belongs to the PurK/PurT family. In terms of assembly, homodimer.

It carries out the reaction N(1)-(5-phospho-beta-D-ribosyl)glycinamide + formate + ATP = N(2)-formyl-N(1)-(5-phospho-beta-D-ribosyl)glycinamide + ADP + phosphate + H(+). It functions in the pathway purine metabolism; IMP biosynthesis via de novo pathway; N(2)-formyl-N(1)-(5-phospho-D-ribosyl)glycinamide from N(1)-(5-phospho-D-ribosyl)glycinamide (formate route): step 1/1. In terms of biological role, involved in the de novo purine biosynthesis. Catalyzes the transfer of formate to 5-phospho-ribosyl-glycinamide (GAR), producing 5-phospho-ribosyl-N-formylglycinamide (FGAR). Formate is provided by PurU via hydrolysis of 10-formyl-tetrahydrofolate. The sequence is that of Formate-dependent phosphoribosylglycinamide formyltransferase from Francisella tularensis subsp. tularensis (strain WY96-3418).